The primary structure comprises 135 residues: Small ribosomal subunit protein uS9 (135 aa).

It belongs to the universal ribosomal protein uS9 family.

The polypeptide is Small ribosomal subunit protein uS9 (Petrotoga mobilis (strain DSM 10674 / SJ95)).